A 404-amino-acid chain; its full sequence is G1/S-specific cyclin-E2 (404 aa).

The tract at residues 1 to 45 (MSRRSSRLQAKQQPQASQTDSPQEAQIIQAKKRKTAQDVKKRKEE) is disordered. A compositionally biased stretch (polar residues) spans 7–26 (RLQAKQQPQASQTDSPQEAQ). Residue Ser21 is modified to Phosphoserine. Positions 35–45 (TAQDVKKRKEE) are enriched in basic and acidic residues. Position 348 is an N6-lactoyllysine (Lys348). Ser383 is modified (phosphoserine). At Thr392 the chain carries Phosphothreonine.

The protein belongs to the cyclin family. Cyclin E subfamily. In terms of assembly, interacts with the CDK2 (in vivo) and CDK3 (in vitro) protein kinases to form a serine/threonine kinase holoenzyme complex. The cyclin subunit imparts substrate specificity to the complex. Phosphorylation by CDK2 triggers its release from CDK2 and degradation via the ubiquitin proteasome pathway. Post-translationally, lactylated at Lys-348. Delactylated by SIRT3.

Its subcellular location is the nucleus. Functionally, essential for the control of the cell cycle at the late G1 and early S phase. The protein is G1/S-specific cyclin-E2 (CCNE2) of Bos taurus (Bovine).